The primary structure comprises 424 residues: Serine--tRNA ligase (424 aa).

230-232 contacts L-serine; it reads TAE. An ATP-binding site is contributed by 261 to 263; that stretch reads RSE. L-serine is bound at residue glutamate 284. Residue 348–351 participates in ATP binding; it reads EISS. An L-serine-binding site is contributed by serine 382.

This sequence belongs to the class-II aminoacyl-tRNA synthetase family. Type-1 seryl-tRNA synthetase subfamily. In terms of assembly, homodimer. The tRNA molecule binds across the dimer.

It localises to the cytoplasm. It carries out the reaction tRNA(Ser) + L-serine + ATP = L-seryl-tRNA(Ser) + AMP + diphosphate + H(+). It catalyses the reaction tRNA(Sec) + L-serine + ATP = L-seryl-tRNA(Sec) + AMP + diphosphate + H(+). It participates in aminoacyl-tRNA biosynthesis; selenocysteinyl-tRNA(Sec) biosynthesis; L-seryl-tRNA(Sec) from L-serine and tRNA(Sec): step 1/1. Catalyzes the attachment of serine to tRNA(Ser). Is also able to aminoacylate tRNA(Sec) with serine, to form the misacylated tRNA L-seryl-tRNA(Sec), which will be further converted into selenocysteinyl-tRNA(Sec). This chain is Serine--tRNA ligase, found in Solibacter usitatus (strain Ellin6076).